Reading from the N-terminus, the 379-residue chain is NuA4 complex subunit EAF3 homolog (379 aa).

The 56-residue stretch at 6–61 folds into the Tudor-knot domain; the sequence is EENEKVLVHHQNRIYEAKIIKVDPKTSKSDKKKPLYFIHYLGWKEKWNEWIEPNKI. A disordered region spans residues 75 to 212; sequence TNIKASTTSL…KRNDSKSSHF (138 aa). Positions 78 to 87 are enriched in low complexity; it reads KASTTSLNNK. Residues 111 to 141 show a composition bias toward acidic residues; the sequence is ENSDEDENESELEDGGGEDADEGGEDIEDQE. Residues 165 to 199 are compositionally biased toward low complexity; that stretch reads SSSSSSSSKSNNNNNNNNNNNNNNNNNNNNNNNNN. Positions 214-377 constitute an MRG domain; the sequence is STKFIDIEIP…ASSPYLKAAS (164 aa).

In terms of assembly, component of the NuA4 histone acetyltransferase complex.

It is found in the nucleus. Functionally, component of the NuA4 histone acetyltransferase complex which is involved in transcriptional activation of selected genes principally by acetylation of nucleosomal histone H4 and H2A. The NuA4 complex is also involved in DNA repair. Also a component of a complex which acts to repress transcription by deacetylation of nucleosomal histones. In Dictyostelium discoideum (Social amoeba), this protein is NuA4 complex subunit EAF3 homolog.